We begin with the raw amino-acid sequence, 74 residues long: MSTGIWVLIVIIAAVLGFVGGFFAARKYMEDYLKKNPPINEQMMRTMMIQMGQKPSEKKLHQMMNAMKNNYGKK.

Residues 5 to 25 (IWVLIVIIAAVLGFVGGFFAA) traverse the membrane as a helical segment.

Belongs to the UPF0154 family.

The protein resides in the cell membrane. The protein is UPF0154 protein LSL_0542 of Ligilactobacillus salivarius (strain UCC118) (Lactobacillus salivarius).